The primary structure comprises 186 residues: Large ribosomal subunit protein eL18B (186 aa).

The residue at position 50 (lysine 50) is an N6,N6,N6-trimethyllysine. A Glycyl lysine isopeptide (Lys-Gly) (interchain with G-Cter in ubiquitin) cross-link involves residue lysine 116.

This sequence belongs to the eukaryotic ribosomal protein eL18 family. Component of the large ribosomal subunit (LSU). Mature yeast ribosomes consist of a small (40S) and a large (60S) subunit. The 40S small subunit contains 1 molecule of ribosomal RNA (18S rRNA) and 33 different proteins (encoded by 57 genes). The large 60S subunit contains 3 rRNA molecules (25S, 5.8S and 5S rRNA) and 46 different proteins (encoded by 81 genes). eL18 interacts with NAP1.

The protein resides in the cytoplasm. Its function is as follows. Component of the ribosome, a large ribonucleoprotein complex responsible for the synthesis of proteins in the cell. The small ribosomal subunit (SSU) binds messenger RNAs (mRNAs) and translates the encoded message by selecting cognate aminoacyl-transfer RNA (tRNA) molecules. The large subunit (LSU) contains the ribosomal catalytic site termed the peptidyl transferase center (PTC), which catalyzes the formation of peptide bonds, thereby polymerizing the amino acids delivered by tRNAs into a polypeptide chain. The nascent polypeptides leave the ribosome through a tunnel in the LSU and interact with protein factors that function in enzymatic processing, targeting, and the membrane insertion of nascent chains at the exit of the ribosomal tunnel. The protein is Large ribosomal subunit protein eL18B of Saccharomyces cerevisiae (strain ATCC 204508 / S288c) (Baker's yeast).